A 710-amino-acid chain; its full sequence is Polyribonucleotide nucleotidyltransferase (710 aa).

Mg(2+) contacts are provided by Asp-489 and Asp-495. The region spanning 556–615 is the KH domain; the sequence is PKIDTIKIDVDKIKVVIGKGGETIDKIIAETGVKIDIDDEGNVSIYSSDQAAIDRTKEII. Residues 625 to 693 enclose the S1 motif domain; that stretch reads GEVYHAKVIR…EKGRVDASMK (69 aa).

Belongs to the polyribonucleotide nucleotidyltransferase family. Mg(2+) serves as cofactor.

The protein resides in the cytoplasm. It carries out the reaction RNA(n+1) + phosphate = RNA(n) + a ribonucleoside 5'-diphosphate. Involved in mRNA degradation. Catalyzes the phosphorolysis of single-stranded polyribonucleotides processively in the 3'- to 5'-direction. The protein is Polyribonucleotide nucleotidyltransferase of Streptococcus pyogenes serotype M3 (strain ATCC BAA-595 / MGAS315).